The primary structure comprises 123 residues: Ribosome-binding factor A (123 aa).

Belongs to the RbfA family. As to quaternary structure, monomer. Binds 30S ribosomal subunits, but not 50S ribosomal subunits or 70S ribosomes.

It localises to the cytoplasm. Its function is as follows. One of several proteins that assist in the late maturation steps of the functional core of the 30S ribosomal subunit. Associates with free 30S ribosomal subunits (but not with 30S subunits that are part of 70S ribosomes or polysomes). Required for efficient processing of 16S rRNA. May interact with the 5'-terminal helix region of 16S rRNA. The chain is Ribosome-binding factor A from Neisseria gonorrhoeae (strain ATCC 700825 / FA 1090).